Consider the following 513-residue polypeptide: 2-isopropylmalate synthase (513 aa).

Positions 5–268 (LIIFDTTLRD…EVGIDTTQIV (264 aa)) constitute a Pyruvate carboxyltransferase domain. Mn(2+) contacts are provided by D14, H202, H204, and N239. The segment at 394 to 513 (RLLSLEQQSA…SKNERVAAQG (120 aa)) is regulatory domain.

This sequence belongs to the alpha-IPM synthase/homocitrate synthase family. LeuA type 1 subfamily. Homodimer. Requires Mn(2+) as cofactor.

The protein localises to the cytoplasm. It catalyses the reaction 3-methyl-2-oxobutanoate + acetyl-CoA + H2O = (2S)-2-isopropylmalate + CoA + H(+). It functions in the pathway amino-acid biosynthesis; L-leucine biosynthesis; L-leucine from 3-methyl-2-oxobutanoate: step 1/4. Catalyzes the condensation of the acetyl group of acetyl-CoA with 3-methyl-2-oxobutanoate (2-ketoisovalerate) to form 3-carboxy-3-hydroxy-4-methylpentanoate (2-isopropylmalate). The polypeptide is 2-isopropylmalate synthase (Methylibium petroleiphilum (strain ATCC BAA-1232 / LMG 22953 / PM1)).